The primary structure comprises 55 residues: UPF0434 protein Erum1340/ERWE_CDS_01300 (55 aa).

It belongs to the UPF0434 family.

In Ehrlichia ruminantium (strain Welgevonden), this protein is UPF0434 protein Erum1340/ERWE_CDS_01300.